Reading from the N-terminus, the 220-residue chain is Orotate phosphoribosyltransferase (220 aa).

Residue K26 coordinates 5-phospho-alpha-D-ribose 1-diphosphate. 34 to 35 provides a ligand contact to orotate; sequence FF. Residues 72–73, R99, K100, K103, H105, and 125–133 each bind 5-phospho-alpha-D-ribose 1-diphosphate; these read YK and DDVISAGTS. Orotate-binding residues include S129 and R157.

Belongs to the purine/pyrimidine phosphoribosyltransferase family. PyrE subfamily. As to quaternary structure, homodimer. It depends on Mg(2+) as a cofactor.

The enzyme catalyses orotidine 5'-phosphate + diphosphate = orotate + 5-phospho-alpha-D-ribose 1-diphosphate. It functions in the pathway pyrimidine metabolism; UMP biosynthesis via de novo pathway; UMP from orotate: step 1/2. Its function is as follows. Catalyzes the transfer of a ribosyl phosphate group from 5-phosphoribose 1-diphosphate to orotate, leading to the formation of orotidine monophosphate (OMP). The polypeptide is Orotate phosphoribosyltransferase (Nitrosococcus oceani (strain ATCC 19707 / BCRC 17464 / JCM 30415 / NCIMB 11848 / C-107)).